The following is an 806-amino-acid chain: Phenylalanine--tRNA ligase beta subunit (806 aa).

The region spanning 39-154 (SAGLKKIVVG…EAIAPGTDVY (116 aa)) is the tRNA-binding domain. Positions 410–485 (PQPKVIQFDS…RLYGYDNLPS (76 aa)) constitute a B5 domain. The Mg(2+) site is built by aspartate 463, aspartate 469, glutamate 472, and glutamate 473. In terms of domain architecture, FDX-ACB spans 713–806 (PKFPEVTRDI…LVATFQAKVR (94 aa)).

The protein belongs to the phenylalanyl-tRNA synthetase beta subunit family. Type 1 subfamily. As to quaternary structure, tetramer of two alpha and two beta subunits. Requires Mg(2+) as cofactor.

The protein localises to the cytoplasm. The catalysed reaction is tRNA(Phe) + L-phenylalanine + ATP = L-phenylalanyl-tRNA(Phe) + AMP + diphosphate + H(+). The chain is Phenylalanine--tRNA ligase beta subunit from Latilactobacillus sakei subsp. sakei (strain 23K) (Lactobacillus sakei subsp. sakei).